Reading from the N-terminus, the 147-residue chain is Large ribosomal subunit protein uL15 (147 aa).

Residues 1-20 (MTLRLNDLKPADGARTERTR) show a composition bias toward basic and acidic residues. The tract at residues 1–61 (MTLRLNDLKP…GFEGGQTPMQ (61 aa)) is disordered. Positions 23–33 (RGIGSGLGKTA) are enriched in gly residues. Residues 34–47 (GRGHKGSFARKGGG) are compositionally biased toward basic residues.

It belongs to the universal ribosomal protein uL15 family. In terms of assembly, part of the 50S ribosomal subunit.

In terms of biological role, binds to the 23S rRNA. This chain is Large ribosomal subunit protein uL15, found in Xanthomonas euvesicatoria pv. vesicatoria (strain 85-10) (Xanthomonas campestris pv. vesicatoria).